The chain runs to 1058 residues: Structural maintenance of chromosomes protein 6A (1058 aa).

The Zinc-hook domain occupies 23 to 1049 (ILRIRLENFM…SMVKSHEKIK (1027 aa)). 50–57 (GQNGSGKS) serves as a coordination point for ATP. The stretch at 136–449 (KISSRKEELR…NDLKKHQTNK (314 aa)) forms a coiled coil. Residues 450–633 (VTAFGGDKVI…PPRPRRPTRL (184 aa)) are flexible hinge. A coiled-coil region spans residues 634 to 927 (CASFDDQIKD…RNKDLLKREL (294 aa)).

The protein belongs to the SMC family. SMC6 subfamily. Forms a heterodimer with SMC5. The SMC5-SMC6 complex is composed of the SMC5 and SMC6 heterodimer attached via their hinge domain and from the non-SMC subunit NSE4A or NSE4B. In terms of tissue distribution, expressed in seedlings, rosette leaves and floral buds.

Its subcellular location is the nucleus. The protein localises to the chromosome. Its function is as follows. Core component of the SMC5-SMC6 complex that promotes sister chromatid alignment after DNA damage and facilitates double-stranded DNA breaks (DSBs) repair via homologous recombination between sister chromatids. In Arabidopsis thaliana (Mouse-ear cress), this protein is Structural maintenance of chromosomes protein 6A (SMC6A).